A 601-amino-acid polypeptide reads, in one-letter code: DNA ligase (601 aa).

Asp258 provides a ligand contact to ATP. The N6-AMP-lysine intermediate role is filled by Lys260. ATP is bound by residues Arg265, Arg280, Glu310, Phe350, Arg427, and Lys433. A disordered region spans residues 568-601; it reads DKSPEDATTTDEILEMYNKQPKKKIESPPIDESV.

The protein belongs to the ATP-dependent DNA ligase family. Mg(2+) is required as a cofactor.

It carries out the reaction ATP + (deoxyribonucleotide)n-3'-hydroxyl + 5'-phospho-(deoxyribonucleotide)m = (deoxyribonucleotide)n+m + AMP + diphosphate.. In terms of biological role, DNA ligase that seals nicks in double-stranded DNA during DNA replication, DNA recombination and DNA repair. This is DNA ligase from Saccharolobus islandicus (strain Y.G.57.14 / Yellowstone #1) (Sulfolobus islandicus).